A 254-amino-acid chain; its full sequence is MNRRHRIYEGKAKILYEGPEPGTYIQFFKDDATAFNAKKHEVIDGKGVLNNRISEHIFSHLGRLGIPTHFIKRINMREQLIKAVEIIPLEVVVRNVAAGSLSKRLGLEEGTVLSQSIIEFYYKNDSLDDPMVTEEHITAFGWAVPQEIEDIMQLSIRINDFLSGLFAAANIQLIDFKMEFGRLWEDEAMRIVLADEISPDSARLWDMQTREKMDKDRFRRNMGGLINAYQEVAKRLGIINENEPPRPSGPVLVK.

The protein belongs to the SAICAR synthetase family.

It carries out the reaction 5-amino-1-(5-phospho-D-ribosyl)imidazole-4-carboxylate + L-aspartate + ATP = (2S)-2-[5-amino-1-(5-phospho-beta-D-ribosyl)imidazole-4-carboxamido]succinate + ADP + phosphate + 2 H(+). The protein operates within purine metabolism; IMP biosynthesis via de novo pathway; 5-amino-1-(5-phospho-D-ribosyl)imidazole-4-carboxamide from 5-amino-1-(5-phospho-D-ribosyl)imidazole-4-carboxylate: step 1/2. The chain is Phosphoribosylaminoimidazole-succinocarboxamide synthase from Bartonella quintana (strain Toulouse) (Rochalimaea quintana).